The chain runs to 502 residues: CBL-interacting protein kinase 11 (502 aa).

Positions 12 to 267 (YEVGKQLGQG…IPRIKRSTWY (256 aa)) constitute a Protein kinase domain. ATP-binding positions include 18–26 (LGQGTFAKV) and lysine 41. Aspartate 135 (proton acceptor) is an active-site residue. The segment at 153–182 (DFGLSALAESKRQDGLLHTTCGTPAYVAPE) is activation loop. The NAF domain maps to 297-333 (AECSTSEENQGSLSLPNLNAFDIISLSTGFNLSGFFE). Positions 339–367 (QEERFTTRQPVTTVLGKLKELAKRLKLKV) are PPI. The disordered stretch occupies residues 447–502 (LQGEQQQSPLPPELPQDQLQPSLPQQEKQDMPEPPLLPQVPQEEVQTSIPAEQTKN). The span at 461–472 (PQDQLQPSLPQQ) shows a compositional bias: low complexity. The segment covering 493 to 502 (TSIPAEQTKN) has biased composition (polar residues).

It belongs to the protein kinase superfamily. CAMK Ser/Thr protein kinase family. SNF1 subfamily. The cofactor is Mn(2+).

It catalyses the reaction L-seryl-[protein] + ATP = O-phospho-L-seryl-[protein] + ADP + H(+). The enzyme catalyses L-threonyl-[protein] + ATP = O-phospho-L-threonyl-[protein] + ADP + H(+). In terms of biological role, CIPK serine-threonine protein kinases interact with CBL proteins. Binding of a CBL protein to the regulatory NAF domain of CIPK protein lead to the activation of the kinase in a calcium-dependent manner. This is CBL-interacting protein kinase 11 (CIPK11) from Oryza sativa subsp. japonica (Rice).